The primary structure comprises 471 residues: UDP-glycosyltransferase CGT (471 aa).

The Proton acceptor role is filled by His-24. Position 24 (His-24) interacts with an anthocyanidin. Asp-120 serves as the catalytic Charge relay. Thr-143 is a binding site for UDP-alpha-D-glucose. The segment at 280–281 is UDP; that stretch reads SR. UDP-alpha-D-glucose-binding residues include Val-343, Gln-345, His-360, Trp-363, Asn-364, Ser-365, and Glu-368. Gly-383 contributes to the an anthocyanidin binding site. UDP-alpha-D-glucose contacts are provided by Asp-384 and Gln-385.

It belongs to the UDP-glycosyltransferase family.

It carries out the reaction a 3'-hydro-2'-hydroxy-beta-oxodihydrochalcone + UDP-alpha-D-glucose = a 3'-(beta-D-glucopyranosyl)-2'-hydroxy-beta-oxodihydrochalcone + UDP + H(+). In terms of biological role, UDP-glucose-dependent glucosyltransferase catalyzing the c-glucosylation of 2-hydroxyflavanones. The chain is UDP-glycosyltransferase CGT from Oryza sativa subsp. japonica (Rice).